Reading from the N-terminus, the 102-residue chain is Small ribosomal subunit protein uS10 (102 aa).

This sequence belongs to the universal ribosomal protein uS10 family. In terms of assembly, part of the 30S ribosomal subunit.

Involved in the binding of tRNA to the ribosomes. The polypeptide is Small ribosomal subunit protein uS10 (Dehalococcoides mccartyi (strain ATCC BAA-2266 / KCTC 15142 / 195) (Dehalococcoides ethenogenes (strain 195))).